Consider the following 281-residue polypeptide: 2-dehydro-3-deoxyphosphooctonate aldolase (281 aa).

The protein belongs to the KdsA family.

Its subcellular location is the cytoplasm. The enzyme catalyses D-arabinose 5-phosphate + phosphoenolpyruvate + H2O = 3-deoxy-alpha-D-manno-2-octulosonate-8-phosphate + phosphate. It participates in carbohydrate biosynthesis; 3-deoxy-D-manno-octulosonate biosynthesis; 3-deoxy-D-manno-octulosonate from D-ribulose 5-phosphate: step 2/3. The protein operates within bacterial outer membrane biogenesis; lipopolysaccharide biosynthesis. This is 2-dehydro-3-deoxyphosphooctonate aldolase from Pseudomonas fluorescens (strain ATCC BAA-477 / NRRL B-23932 / Pf-5).